The chain runs to 305 residues: tRNA-splicing endonuclease (305 aa).

Catalysis depends on residues Tyr-246, His-257, and Lys-287.

Belongs to the tRNA-intron endonuclease family. Archaeal long subfamily. In terms of assembly, homodimer.

The catalysed reaction is pretRNA = a 3'-half-tRNA molecule with a 5'-OH end + a 5'-half-tRNA molecule with a 2',3'-cyclic phosphate end + an intron with a 2',3'-cyclic phosphate and a 5'-hydroxyl terminus.. Functionally, endonuclease that removes tRNA introns. Cleaves pre-tRNA at the 5'- and 3'-splice sites to release the intron. The products are an intron and two tRNA half-molecules bearing 2',3' cyclic phosphate and 5'-OH termini. Recognizes a pseudosymmetric substrate in which 2 bulged loops of 3 bases are separated by a stem of 4 bp. This chain is tRNA-splicing endonuclease, found in Archaeoglobus fulgidus (strain ATCC 49558 / DSM 4304 / JCM 9628 / NBRC 100126 / VC-16).